The primary structure comprises 109 residues: Phosphoribosyl-ATP pyrophosphatase (109 aa).

The protein belongs to the PRA-PH family.

It is found in the cytoplasm. It carries out the reaction 1-(5-phospho-beta-D-ribosyl)-ATP + H2O = 1-(5-phospho-beta-D-ribosyl)-5'-AMP + diphosphate + H(+). It participates in amino-acid biosynthesis; L-histidine biosynthesis; L-histidine from 5-phospho-alpha-D-ribose 1-diphosphate: step 2/9. This chain is Phosphoribosyl-ATP pyrophosphatase, found in Paramagnetospirillum magneticum (strain ATCC 700264 / AMB-1) (Magnetospirillum magneticum).